A 490-amino-acid chain; its full sequence is GTPase Der (490 aa).

EngA-type G domains follow at residues 3-166 and 203-376; these read PVVA…MDDV and IKLA…DSST. Residues 9–16, 56–60, 118–121, 209–216, 256–260, and 321–324 contribute to the GTP site; these read GRPNVGKS, DTGGI, NKTD, DTAGV, and NKWD. In terms of domain architecture, KH-like spans 377 to 461; the sequence is RRVSTAMLTR…PIRIQFKEGE (85 aa).

The protein belongs to the TRAFAC class TrmE-Era-EngA-EngB-Septin-like GTPase superfamily. EngA (Der) GTPase family. In terms of assembly, associates with the 50S ribosomal subunit.

GTPase that plays an essential role in the late steps of ribosome biogenesis. This chain is GTPase Der, found in Salmonella newport (strain SL254).